Here is a 475-residue protein sequence, read N- to C-terminus: Cytosolic non-specific dipeptidase (475 aa).

Position 58 is a phosphoserine (Ser58). His99 is a Mn(2+) binding site. Asp101 is an active-site residue. Residue Asp132 participates in Mn(2+) binding. The active-site Proton acceptor is the Glu166. Residues 166-167, Asp195, and His228 each bind substrate; that span reads EE. 2 residues coordinate Mn(2+): Glu167 and Asp195. Ser299 is modified (phosphoserine). 4 residues coordinate substrate: Thr330, Arg343, Ser417, and His445. Residue His445 participates in Mn(2+) binding.

It belongs to the peptidase M20A family. Homodimer. Mn(2+) serves as cofactor. As to expression, highly expressed in the parafascicular nucleus of the thalamus, tuberomammillary nucleus of the hypothalamus and the mitral cell layer of the olfactory bulb.

Its subcellular location is the cytoplasm. The catalysed reaction is Hydrolysis of dipeptides, preferentially hydrophobic dipeptides including prolyl amino acids.. The enzyme catalyses L-threonyl-L-threonine + H2O = 2 L-threonine. It catalyses the reaction L-threonyl-L-serine + H2O = L-threonine + L-serine. It carries out the reaction L-seryl-L-threonine + H2O = L-threonine + L-serine. The catalysed reaction is L-cysteinylglycine + H2O = L-cysteine + glycine. The enzyme catalyses L-alanyl-L-cysteine + H2O = L-cysteine + L-alanine. It catalyses the reaction (S)-lactate + L-phenylalanine = N-[(S)-lactoyl]-L-phenylalanine + H2O. Inhibited by bestatin. Catalyzes the peptide bond hydrolysis in dipeptides, displaying a non-redundant activity toward threonyl dipeptides. Mediates threonyl dipeptide catabolism in a tissue-specific way. Has high dipeptidase activity toward cysteinylglycine, an intermediate metabolite in glutathione metabolism. Metabolizes N-lactoyl-amino acids, both through hydrolysis to form lactic acid and amino acids, as well as through their formation by reverse proteolysis. Plays a role in the regulation of cell cycle arrest and apoptosis. This Mus musculus (Mouse) protein is Cytosolic non-specific dipeptidase (Cndp2).